Consider the following 437-residue polypeptide: Transcription factor E2F1 (437 aa).

Disordered stretches follow at residues 42–87 (ASAP…GRPP) and 101–128 (LAESSGPARGRGRHPGKGVKSPGEKSRY). Positions 67-108 (ATPQAPRPTPSAPRPALGRPPVKRRLDLETDHQYLAESSGPA) are cyclin A:CDK2 binding. An interaction with BIRC2/c-IAP1 region spans residues 89–191 (KRRLDLETDH…KKSKNHIQWL (103 aa)). Residues 110–194 (GRGRHPGKGV…KNHIQWLGSH (85 aa)) mediate DNA binding. Lysine 117, lysine 120, and lysine 125 each carry N6-acetyllysine. A leucine-zipper region spans residues 153-174 (LNWAAEVLKVQKRRIYDITNVL). The DEF box motif lies at 158-194 (EVLKVQKRRIYDITNVLEGIQLIAKKSKNHIQWLGSH). Residue lysine 185 is modified to N6-methyllysine; by SETD7. A required for interaction with TRIM28 region spans residues 192 to 382 (GSHTTVGVGG…RLSPLVAADS (191 aa)). The segment at 195 to 284 (TTVGVGGRLE…AVDSSENFQI (90 aa)) is dimerization. The disordered stretch occupies residues 300–349 (EETVGGISPGKTPSQEVTSEEENRATDSATIVSPPPSSPPSSLTTDPSQS). Residues 339 to 349 (PSSLTTDPSQS) are compositionally biased toward low complexity. The residue at position 364 (serine 364) is a Phosphoserine; by CHEK2. The segment at 368 to 437 (PVDEDRLSPL…DFGDLTPLDF (70 aa)) is transactivation. At serine 375 the chain carries Phosphoserine. Residue serine 403 is modified to Phosphoserine; by GSK3-beta. The RB1 binding stretch occupies residues 409-426 (LDYHFGLEEGEGIRDLFD). Threonine 433 carries the phosphothreonine; by GSK3-beta modification.

The protein belongs to the E2F/DP family. As to quaternary structure, component of the DRTF1/E2F transcription factor complex. Forms heterodimers with DP family members. The E2F1 complex binds specifically hypophosphorylated RB1, the interaction represses E2F1-driven transcription. During the cell cycle, RB1 becomes phosphorylated in mid-to-late G1 phase, detaches from the DRTF1/E2F complex, rendering E2F transcriptionally active. Viral oncoproteins, notably E1A, T-antigen and HPV E7, are capable of sequestering RB1, thus releasing the active complex. Interacts with TRRAP, which probably mediates its interaction with histone acetyltransferase complexes, leading to transcription activation. Binds TOPBP1 and EAPP. Interacts with ARID3A. Interacts with TRIM28; the interaction inhibits E2F1 acetylation through recruiting HDAC1 and represses its transcriptional activity. Interaction with KAT2B; the interaction acetylates E2F1 enhancing its DNA-binding and transcriptional activity. Interacts with BIRC2/c-IAP1 (via BIR domains). The complex TFDP1:E2F1 interacts with CEBPA; the interaction prevents CEBPA binding to target genes promoters and represses its transcriptional activity. Interacts with RRP1B. Interacts with HCFC1. Interacts with KMT2E; the interaction is probably indirect and is mediated via HCFC1. Interacts with DCAF5 and L3MBTL3; the interaction requires methylation at Lys-185 and is necessary to target E2F1 for ubiquitination by the CRL4-DCAF5 E3 ubiquitin ligase complex. (Microbial infection) Interacts with human cytomegalovirus/HHV-5 protein UL123. Phosphorylated by CDK2 and cyclin A-CDK2 in the S-phase. Phosphorylation at Ser-364 by CHEK2 stabilizes E2F1 upon DNA damage and regulates its effect on transcription and apoptosis. Phosphorylation at Ser-403 by GSK3B promotes interaction with USP11, leading to its deubiquitination and stabilization. In terms of processing, ubiquitinated via 'Lys-63'-linked ubiquitin, leading to its degradation. Deubiquitinated by USP11 following phosphorylation by GSK3B, promoting its stability. Post-translationally, acetylation stimulates DNA-binding. Enhanced under stress conditions such as DNA damage and inhibited by retinoblastoma protein RB1. Regulated by KAP1/TRIM28 which recruits HDAC1 to E2F1 resulting in deacetylation. Acetylated by P/CAF/KAT2B. Methylation at Lys-185 by SETD7 promotes E2F1 ubiquitin-dependent proteasomal degradation.

Its subcellular location is the nucleus. With respect to regulation, BIRC2/c-IAP1 stimulates its transcriptional activity. In terms of biological role, transcription activator that binds DNA cooperatively with DP proteins through the E2 recognition site, 5'-TTTC[CG]CGC-3' found in the promoter region of a number of genes whose products are involved in cell cycle regulation or in DNA replication. The DRTF1/E2F complex functions in the control of cell-cycle progression from G1 to S phase. E2F1 binds preferentially RB1 in a cell-cycle dependent manner. It can mediate both cell proliferation and TP53/p53-dependent apoptosis. Blocks adipocyte differentiation by binding to specific promoters repressing CEBPA binding to its target gene promoters. Directly activates transcription of PEG10. Positively regulates transcription of RRP1B. The protein is Transcription factor E2F1 of Homo sapiens (Human).